The primary structure comprises 486 residues: METVQLRNPRRQLKKLDEDSLTKQPEEVFDVLEKLGEGSYGSVFKAIHKETGQVVAIKQVPVESDLQEIIKEISIMQQCDSPHVVKYYGSYFKNTDLWIVMEYCGAGSVSDIIRLRNKTLTEEEIATIVQSTLKGLEYLHFMRKIHRDIKAGNILLNTEGHAKLADFGVAGQLTDTMAKRNTVIGTPFWMAPGVIQEIGYNCVADIWSLGITAIEMAEGKPPYADIHPMRAIFMIPTNPPPTFRKPELWSDAFTDFVKQCLVKSPEQRATAIQLLQHPFVKSAKGASILRDLINEAMDIKLKRQEAQQRELDQEDEENSEEDETDSGTMVRASGDETGTIRVVNTMSDGANTMIEHDGTLESQLGTMVINTEDEEEEGTMKRRDETMQPARPSFLEYFEQKAKENQVNSFGKNVSGQTKNSSDWKVPQDGDYEFLKTWSVDELQRRLSALDPMMEQEIEEIRQKYQSKRQPILDAIEAKKRRQQNF.

Residues Phe-29 to Val-280 enclose the Protein kinase domain. Residues Leu-35–Val-43 and Lys-58 contribute to the ATP site. The active-site Proton acceptor is Asp-148. Phosphothreonine; by autocatalysis is present on Thr-182. Positions Ile-288 to Thr-324 form a coiled coil. The disordered stretch occupies residues Glu-305–Ala-332. The segment covering Asp-312–Asp-325 has biased composition (acidic residues). Positions Tyr-432–Lys-479 constitute an SARAH domain.

The protein belongs to the protein kinase superfamily. STE Ser/Thr protein kinase family. STE20 subfamily. As to quaternary structure, homodimer; mediated via the coiled-coil region. Requires Mg(2+) as cofactor. In terms of processing, proteolytically cleaved by caspase-3 during apoptosis at Asp-325 resulting in a 37 kDa form. Proteolytic cleavage results in kinase activation and nuclear translocation of the truncated form (MST1/N).

Its subcellular location is the cytoplasm. The protein resides in the nucleus. The catalysed reaction is L-seryl-[protein] + ATP = O-phospho-L-seryl-[protein] + ADP + H(+). The enzyme catalyses L-threonyl-[protein] + ATP = O-phospho-L-threonyl-[protein] + ADP + H(+). Its activity is regulated as follows. The C-terminal non-catalytic region inhibits the kinase activity, the enzyme is activated by caspase-cleavage. Homodimerization and autophosphorylation of Thr-182 is also required for full activation. Stress-activated, pro-apoptotic kinase which, following caspase-cleavage, enters the nucleus and induces chromatin condensation followed by internucleosomal DNA fragmentation. Key component of the Hippo signaling pathway which plays a pivotal role in organ size control and tumor suppression by restricting proliferation and promoting apoptosis. The core of this pathway is composed of a kinase cascade wherein STK3/MST2 and STK4/MST1, in complex with its regulatory protein SAV1, phosphorylates and activates LATS1/2 in complex with its regulatory protein MOB1, which in turn phosphorylates and inactivates YAP1 oncoprotein and WWTR1/TAZ. Phosphorylation of YAP1 by LATS2 inhibits its translocation into the nucleus to regulate cellular genes important for cell proliferation, cell death, and cell migration. Phosphorylates 'Ser-14' of histone H2B (H2BS14ph) during apoptosis. Phosphorylates FOXO3 upon oxidative stress, which results in its nuclear translocation and cell death initiation. This chain is Serine/threonine-protein kinase 4 (STK4), found in Gallus gallus (Chicken).